The following is a 242-amino-acid chain: Carboxy-S-adenosyl-L-methionine synthase (242 aa).

Residues Y39, 64–66 (GCS), 89–90 (DN), 117–118 (DI), N132, and R199 contribute to the S-adenosyl-L-methionine site.

Belongs to the class I-like SAM-binding methyltransferase superfamily. Cx-SAM synthase family. As to quaternary structure, homodimer.

The catalysed reaction is prephenate + S-adenosyl-L-methionine = carboxy-S-adenosyl-L-methionine + 3-phenylpyruvate + H2O. In terms of biological role, catalyzes the conversion of S-adenosyl-L-methionine (SAM) to carboxy-S-adenosyl-L-methionine (Cx-SAM). This chain is Carboxy-S-adenosyl-L-methionine synthase, found in Psychromonas ingrahamii (strain DSM 17664 / CCUG 51855 / 37).